Reading from the N-terminus, the 129-residue chain is uncharacterized protein (129 aa).

This is an uncharacterized protein from Mycoplasma pneumoniae (strain ATCC 29342 / M129 / Subtype 1) (Mycoplasmoides pneumoniae).